Here is a 152-residue protein sequence, read N- to C-terminus: Ribosome maturation factor RimP (152 aa).

This sequence belongs to the RimP family.

Its subcellular location is the cytoplasm. Its function is as follows. Required for maturation of 30S ribosomal subunits. The polypeptide is Ribosome maturation factor RimP (Sodalis glossinidius (strain morsitans)).